The sequence spans 154 residues: Lipoprotein signal peptidase (154 aa).

A run of 2 helical transmembrane segments spans residues 55–75 (GQFWLFYLITVIVVAAIVIYI) and 85–105 (AGVGLGLMLGGAIGNFLDRVF). Active-site residues include Asp111 and Asp129. Residues 127-147 (VADSALTVGVILLFVHMFFFA) form a helical membrane-spanning segment.

The protein belongs to the peptidase A8 family.

The protein resides in the cell membrane. It catalyses the reaction Release of signal peptides from bacterial membrane prolipoproteins. Hydrolyzes -Xaa-Yaa-Zaa-|-(S,diacylglyceryl)Cys-, in which Xaa is hydrophobic (preferably Leu), and Yaa (Ala or Ser) and Zaa (Gly or Ala) have small, neutral side chains.. Its pathway is protein modification; lipoprotein biosynthesis (signal peptide cleavage). Functionally, this protein specifically catalyzes the removal of signal peptides from prolipoproteins. This Geobacillus kaustophilus (strain HTA426) protein is Lipoprotein signal peptidase.